The sequence spans 546 residues: Arginine--tRNA ligase (546 aa).

The 'HIGH' region signature appears at 117-127 (ANPTGPLHIGR).

Belongs to the class-I aminoacyl-tRNA synthetase family.

Its subcellular location is the cytoplasm. The catalysed reaction is tRNA(Arg) + L-arginine + ATP = L-arginyl-tRNA(Arg) + AMP + diphosphate. This chain is Arginine--tRNA ligase, found in Thermoplasma acidophilum (strain ATCC 25905 / DSM 1728 / JCM 9062 / NBRC 15155 / AMRC-C165).